Consider the following 368-residue polypeptide: Quinolinate synthase (368 aa).

Positions 46 and 63 each coordinate iminosuccinate. Position 110 (C110) interacts with [4Fe-4S] cluster. Residues 141–143 (YVN) and S162 each bind iminosuccinate. Position 230 (C230) interacts with [4Fe-4S] cluster. Residues 256 to 258 (HPE) and T273 each bind iminosuccinate. C320 contributes to the [4Fe-4S] cluster binding site.

The protein belongs to the quinolinate synthase family. Type 3 subfamily. The cofactor is [4Fe-4S] cluster.

Its subcellular location is the cytoplasm. It catalyses the reaction iminosuccinate + dihydroxyacetone phosphate = quinolinate + phosphate + 2 H2O + H(+). It functions in the pathway cofactor biosynthesis; NAD(+) biosynthesis; quinolinate from iminoaspartate: step 1/1. Functionally, catalyzes the condensation of iminoaspartate with dihydroxyacetone phosphate to form quinolinate. In Bacillus cereus (strain B4264), this protein is Quinolinate synthase.